The following is a 726-amino-acid chain: Pre-mRNA-splicing factor CLF1 (726 aa).

16 HAT repeats span residues 55-87 (EFQARKRTEFESRIRYSRDSILAWTKYAQWEAS), 89-121 (NEYERSRSVFERALDVDPRSVDLWIKYTDMELK), 123-155 (RNINHARNLFDRAITLLPRVDALWYKYVYLEEL), 157-188 (LNVSGARQIFERWMQWEPNDKAWQSYIKLEER), 190-221 (NELDRASAIYERWIACRPIPKNWVTWAKFEED), 223-262 (GQPDKAREVFQTALEFFGDEEEQVEKAQSVFAAFARMETR), 264-298 (KEFERARVIYKFALARLPRSKSASLYAQYTKFEKQ), 308-340 (TVLGKRRIQYEEELAYDPTNYDAWFSLARLEED), 352-386 (VEPMRVREVYERAVANVPPALEKRYWRRYIYLWLQ), 396-432 (KDYDRARDVYKAAVKLVPHKTFTFAKLWLAYAYFEIR), 434-465 (LDVSAARKVLGAGIGMCPKPKLFTGYIELEMR), 467-499 (REFDRVRTLYEKFLTYDPSLSSAWIQWTQVESA), 501-534 (EDFERVRAIFELAVQQSLDMPEIVWKAYIDFEAG), 536-567 (GERERARNLYERLLERTSHVKVWISYALMEIA), 585-626 (GDAD…EHGD), and 635-667 (DMLPTTRKRWRKAEDGSGELEEYWDLVFPDDER). The tract at residues 682–726 (AWAQQRAGQGEEGGLSYDLPSDSEDENEDGDEDGDGREEEGMDQD) is disordered. Over residues 702–726 (SDSEDENEDGDEDGDGREEEGMDQD) the composition is skewed to acidic residues.

Belongs to the crooked-neck family. As to quaternary structure, associated with the spliceosome.

It is found in the nucleus. Its function is as follows. Involved in pre-mRNA splicing and cell cycle progression. Required for the spliceosome assembly and initiation of the DNA replication. The sequence is that of Pre-mRNA-splicing factor CLF1 (CLF1) from Cryptococcus neoformans var. neoformans serotype D (strain B-3501A) (Filobasidiella neoformans).